An 89-amino-acid polypeptide reads, in one-letter code: Small ribosomal subunit protein uS15 (89 aa).

It belongs to the universal ribosomal protein uS15 family. In terms of assembly, part of the 30S ribosomal subunit. Forms a bridge to the 50S subunit in the 70S ribosome, contacting the 23S rRNA.

Its function is as follows. One of the primary rRNA binding proteins, it binds directly to 16S rRNA where it helps nucleate assembly of the platform of the 30S subunit by binding and bridging several RNA helices of the 16S rRNA. Forms an intersubunit bridge (bridge B4) with the 23S rRNA of the 50S subunit in the ribosome. The sequence is that of Small ribosomal subunit protein uS15 from Lactococcus lactis subsp. lactis (strain IL1403) (Streptococcus lactis).